Consider the following 248-residue polypeptide: Phosphoribosyl isomerase A (248 aa).

D14 serves as the catalytic Proton acceptor. D133 serves as the catalytic Proton donor.

This sequence belongs to the HisA/HisF family.

The protein localises to the cytoplasm. It catalyses the reaction 1-(5-phospho-beta-D-ribosyl)-5-[(5-phospho-beta-D-ribosylamino)methylideneamino]imidazole-4-carboxamide = 5-[(5-phospho-1-deoxy-D-ribulos-1-ylimino)methylamino]-1-(5-phospho-beta-D-ribosyl)imidazole-4-carboxamide. The catalysed reaction is N-(5-phospho-beta-D-ribosyl)anthranilate = 1-(2-carboxyphenylamino)-1-deoxy-D-ribulose 5-phosphate. It participates in amino-acid biosynthesis; L-histidine biosynthesis; L-histidine from 5-phospho-alpha-D-ribose 1-diphosphate: step 4/9. It functions in the pathway amino-acid biosynthesis; L-tryptophan biosynthesis; L-tryptophan from chorismate: step 3/5. In terms of biological role, involved in both the histidine and tryptophan biosynthetic pathways. This Mycobacterium sp. (strain JLS) protein is Phosphoribosyl isomerase A.